We begin with the raw amino-acid sequence, 60 residues long: Large ribosomal subunit protein uL30 (60 aa).

This sequence belongs to the universal ribosomal protein uL30 family. As to quaternary structure, part of the 50S ribosomal subunit.

The protein is Large ribosomal subunit protein uL30 of Thermus thermophilus (strain ATCC BAA-163 / DSM 7039 / HB27).